A 455-amino-acid polypeptide reads, in one-letter code: Probable glycine dehydrogenase (decarboxylating) subunit 1 (455 aa).

It belongs to the GcvP family. N-terminal subunit subfamily. In terms of assembly, the glycine cleavage system is composed of four proteins: P, T, L and H. In this organism, the P 'protein' is a heterodimer of two subunits.

The enzyme catalyses N(6)-[(R)-lipoyl]-L-lysyl-[glycine-cleavage complex H protein] + glycine + H(+) = N(6)-[(R)-S(8)-aminomethyldihydrolipoyl]-L-lysyl-[glycine-cleavage complex H protein] + CO2. The glycine cleavage system catalyzes the degradation of glycine. The P protein binds the alpha-amino group of glycine through its pyridoxal phosphate cofactor; CO(2) is released and the remaining methylamine moiety is then transferred to the lipoamide cofactor of the H protein. In Saccharolobus islandicus (strain M.16.27) (Sulfolobus islandicus), this protein is Probable glycine dehydrogenase (decarboxylating) subunit 1.